Here is a 738-residue protein sequence, read N- to C-terminus: Propionyl-CoA carboxylase alpha chain, mitochondrial (738 aa).

In terms of domain architecture, Biotin carboxylation spans 62–509 (KFDKILIANR…TTKYLPEVYP (448 aa)). Residues Lys177, 209–270 (SREI…PRHI), Glu261, and Asn296 each bind ATP. An ATP-grasp domain is found at 181 to 378 (KKIATAARVS…IVQQMLRVAY (198 aa)). Mg(2+)-binding residues include Glu336, Glu349, and Asn351. Positions 336, 349, and 351 each coordinate Mn(2+). The active site involves Arg353. Residue Phe409 participates in biotin binding. Positions 663–738 (KAKVDLSTVV…DEGEVLVELE (76 aa)) constitute a Biotinyl-binding domain. Position 704 is an N6-biotinyllysine (Lys704).

In terms of assembly, the holoenzyme is a dodecamer composed of 6 alpha subunits and 6 beta subunits. Interacts with sir-2.2. Biotin is required as a cofactor. It depends on Mg(2+) as a cofactor. Mn(2+) serves as cofactor. In terms of processing, the biotin cofactor is covalently attached to the C-terminal biotinyl-binding domain and is required for the catalytic activity.

It localises to the mitochondrion matrix. It carries out the reaction propanoyl-CoA + hydrogencarbonate + ATP = (S)-methylmalonyl-CoA + ADP + phosphate + H(+). The catalysed reaction is butanoyl-CoA + hydrogencarbonate + ATP = (2S)-ethylmalonyl-CoA + ADP + phosphate + H(+). It functions in the pathway metabolic intermediate metabolism; propanoyl-CoA degradation; succinyl-CoA from propanoyl-CoA: step 1/3. This is one of the 2 subunits of the biotin-dependent propionyl-CoA carboxylase (PCC), a mitochondrial enzyme involved in the catabolism of odd chain fatty acids, branched-chain amino acids isoleucine, threonine, methionine, and valine and other metabolites. Propionyl-CoA carboxylase catalyzes the carboxylation of propionyl-CoA/propanoyl-CoA to D-methylmalonyl-CoA/(S)-methylmalonyl-CoA. Within the holoenzyme, the alpha subunit catalyzes the ATP-dependent carboxylation of the biotin carried by the biotin carboxyl carrier (BCC) domain, while the beta subunit then transfers the carboxyl group from carboxylated biotin to propionyl-CoA. Propionyl-CoA carboxylase also significantly acts on butyryl-CoA/butanoyl-CoA, which is converted to ethylmalonyl-CoA/(2S)-ethylmalonyl-CoA. Other alternative minor substrates include (2E)-butenoyl-CoA/crotonoyl-CoA. The protein is Propionyl-CoA carboxylase alpha chain, mitochondrial (pcca-1) of Caenorhabditis briggsae.